A 504-amino-acid polypeptide reads, in one-letter code: MDRHEHFKAPANEDELDDIDDDMVVGVIAEIEQEVLNESESDDDEYDLVDMGAPEPQQADGHSSSNESISSDGSFDPNAEDSDSDDSMIDEAASGGASSAKRRKEQTATDGVGASGSGASGGADYSHLDDDDETDETVRAIIAAIKKPRSAPPEIKLEDFITDICFHPDRDIIALATIIGDVHLYEYGNEENKLLRTIEVHAKACRDVEFTEDGRSLITCSKDKCVMVTDMETEKLKKLYETAHDDAINKLHVLDERLFATGDDAGTVKLWDFRTKDAIFELKEVEDQITQMLTNEQNKLLLATSADGYLTTYNIGARKLYVQSEPYEEELNCMGIYRGSSKLVAGTSKGRLYTYNWGYFGYHCDMYPGIKSPISLMIPITDRIACVAGEDGNIRACHIAPYRNLGVVGQHNMPIESLDINCSGELLASSSHNNDVRFWNVKYFEDFGDIKYNEKHNAYKEKRHNLPSSKCTNASDFFADMTKDQDDDDNDGGNDTAAGPSNVT.

2 disordered regions span residues 1–21 (MDRH…DIDD) and 33–132 (QEVL…DDDD). Composition is skewed to acidic residues over residues 12–21 (NEDELDDIDD) and 33–48 (QEVL…EYDL). Positions 63 to 74 (SSSNESISSDGS) are enriched in low complexity. Residues 78-89 (NAEDSDSDDSMI) show a composition bias toward acidic residues. 6 WD repeats span residues 156 to 195 (KLED…NKLL), 200 to 239 (VHAK…LKKL), 243 to 281 (AHDD…AIFE), 284 to 323 (EVED…LYVQ), 326 to 365 (PYEE…YHCD), and 410 to 449 (QHNM…DFGD). The segment at 477-504 (FFADMTKDQDDDDNDGGNDTAAGPSNVT) is disordered.

This sequence belongs to the WD repeat WDR55 family.

This Drosophila virilis (Fruit fly) protein is WD repeat-containing protein 55 homolog.